We begin with the raw amino-acid sequence, 544 residues long: NADP-dependent malic enzyme (544 aa).

The interval 1–22 (MQNKPSFILRNPSANKGTGFNN) is disordered. Positions 12-21 (PSANKGTGFN) are enriched in polar residues. Tyr-92 serves as the catalytic Proton donor. NAD(+) is bound at residue Arg-145. Lys-163 serves as the catalytic Proton acceptor. Residues Glu-234, Asp-235, and Asp-258 each coordinate a divalent metal cation. Asp-258 contacts NAD(+). 287 to 303 (VFLGAGSAGIGVADCIM) is a binding site for NADP(+). Asn-400 contributes to the NAD(+) binding site.

The protein belongs to the malic enzymes family. In terms of assembly, homotetramer. Mg(2+) is required as a cofactor. Mn(2+) serves as cofactor. In terms of tissue distribution, expressed in the fruiting body.

The protein localises to the cytoplasm. The enzyme catalyses (S)-malate + NADP(+) = pyruvate + CO2 + NADPH. The catalysed reaction is oxaloacetate + H(+) = pyruvate + CO2. This chain is NADP-dependent malic enzyme (malA), found in Dictyostelium discoideum (Social amoeba).